The primary structure comprises 383 residues: Probable assembly chaperone of rpl4 (383 aa).

The span at 1 to 12 (MGKPRPHKKKAS) shows a compositional bias: basic residues. The tract at residues 1–33 (MGKPRPHKKKASKTREKSVLSAGGSISKRKMNE) is disordered. 4 TPR repeats span residues 35-68 (PRKL…ATSN), 73-106 (LSSL…DPTG), 116-147 (AEKF…LRGI), and 193-226 (PEVL…WKDL). The tract at residues 345-383 (NKELGEEMEDDSNVEDGEGEGEEEWEGIESDSDHEMADS) is disordered. Residues 350-374 (EEMEDDSNVEDGEGEGEEEWEGIES) show a composition bias toward acidic residues.

It belongs to the ACL4 family.

It is found in the cytoplasm. It localises to the nucleus. Its function is as follows. Acts as a chaperone for the L4 ribosomal subunit, required for hierarchical ribosome assembly. Shields ribosomal protein L4 until timely release and insertion into the pre-ribosome is possible, once ribosomal protein L18 is present. This is Probable assembly chaperone of rpl4 from Emericella nidulans (strain FGSC A4 / ATCC 38163 / CBS 112.46 / NRRL 194 / M139) (Aspergillus nidulans).